The sequence spans 127 residues: Fluoride-specific ion channel FluC (127 aa).

4 helical membrane passes run 8 to 28 (LLIA…QYWF), 37 to 57 (PWGT…VYAI), 68 to 88 (WKFL…TFSY), and 100 to 120 (ILFL…AFAG). Residues glycine 78 and threonine 81 each coordinate Na(+).

The protein belongs to the fluoride channel Fluc/FEX (TC 1.A.43) family.

The protein localises to the cell inner membrane. The enzyme catalyses fluoride(in) = fluoride(out). With respect to regulation, na(+) is not transported, but it plays an essential structural role and its presence is essential for fluoride channel function. Fluoride-specific ion channel. Important for reducing fluoride concentration in the cell, thus reducing its toxicity. The chain is Fluoride-specific ion channel FluC from Leptospira interrogans serogroup Icterohaemorrhagiae serovar copenhageni (strain Fiocruz L1-130).